The chain runs to 138 residues: ATP synthase epsilon chain (138 aa).

It belongs to the ATPase epsilon chain family. In terms of assembly, F-type ATPases have 2 components, CF(1) - the catalytic core - and CF(0) - the membrane proton channel. CF(1) has five subunits: alpha(3), beta(3), gamma(1), delta(1), epsilon(1). CF(0) has three main subunits: a, b and c.

Its subcellular location is the cell inner membrane. Produces ATP from ADP in the presence of a proton gradient across the membrane. The polypeptide is ATP synthase epsilon chain (Cupriavidus pinatubonensis (strain JMP 134 / LMG 1197) (Cupriavidus necator (strain JMP 134))).